A 588-amino-acid polypeptide reads, in one-letter code: Progranulin (588 aa).

A signal peptide spans 1 to 17; that stretch reads MWILVSWLALVARLVAG. N-linked (GlcNAc...) asparagine glycosylation occurs at asparagine 38. 12 cysteine pairs are disulfide-bonded: cysteine 125-cysteine 138, cysteine 132-cysteine 148, cysteine 281-cysteine 293, cysteine 287-cysteine 303, cysteine 294-cysteine 311, cysteine 304-cysteine 318, cysteine 312-cysteine 325, cysteine 319-cysteine 332, cysteine 363-cysteine 375, cysteine 369-cysteine 385, cysteine 394-cysteine 407, and cysteine 401-cysteine 413. A glycan (N-linked (GlcNAc...) asparagine) is linked at asparagine 372. N-linked (GlcNAc...) asparagine glycosylation occurs at asparagine 525.

This sequence belongs to the granulin family. In terms of assembly, progranulin is secreted as a homodimer. Interacts with SLPI; interaction protects progranulin from proteolysis. Interacts (via region corresponding to granulin-7 peptide) with CTSD; stabilizes CTSD and increases its proteolytic activity. Interacts (via region corresponding to granulin-7 peptide) with SORT1; this interaction mediates endocytosis and lysosome delivery of progranulin; interaction occurs at the neuronal cell surface in a stressed nervous system. Interacts with PSAP; facilitates lysosomal delivery of progranulin from the extracellular space and the biosynthetic pathway. Forms a complex with PSAP and M6PR; PSAP bridges the binding between progranulin and M6PR. Forms a complex with PSAP and SORT1; progranulin bridges the interaction between PSAP and SORT1; facilitates lysosomal targeting of PSAP via SORT1; interaction enhances PSAP uptake in primary cortical neurons. Interacts (via regions corresponding to granulin-2 and granulin-7 peptides) with GBA1; this interaction prevents aggregation of GBA1-SCARB2 complex via interaction with HSPA1A upon stress. Interacts (via region corresponding to granulin-7 peptide) with HSPA1A; mediates recruitment of HSPA1A to GBA1 and prevents GBA1 aggregation in response to stress. In terms of processing, cleaved by ELANE; proteolysis is blocked by SLPI and is concentration- and time-dependent and induces CXCL8/IL-8 production; granulin-3 and granulin-4 are resistant to ELANE. Cleaved by CTSL in lysosome thus regulating the maturation and turnover of progranulin within the lysosome. As to expression, ubiquitous; most abundant in the spleen and several tissues of endocrine significance.

Its subcellular location is the secreted. The protein localises to the lysosome. Its function is as follows. Secreted protein that acts as a key regulator of lysosomal function and as a growth factor involved in inflammation, wound healing and cell proliferation. Regulates protein trafficking to lysosomes, and also the activity of lysosomal enzymes. Also facilitates the acidification of lysosomes, causing degradation of mature CTSD by CTSB. In addition, functions as a wound-related growth factor that acts directly on dermal fibroblasts and endothelial cells to promote division, migration and the formation of capillary-like tubule structures. Also promotes epithelial cell proliferation by blocking TNF-mediated neutrophil activation preventing release of oxidants and proteases. Moreover, modulates inflammation in neurons by preserving neurons survival, axonal outgrowth and neuronal integrity. Inhibits epithelial cell proliferation and induces epithelial cells to secrete IL-8. In terms of biological role, stabilizes CTSD through interaction with CTSD leading to maintain its aspartic-type peptidase activity. The sequence is that of Progranulin (Grn) from Rattus norvegicus (Rat).